Consider the following 98-residue polypeptide: MAATARHYDTILSPVITEKATLLSEQNKVVFRVSADASKDEIAAAVEELFKVKVTKVNTLVTKGKTKRFRGIIGRRSDVKKAIVTLAEGQSIDITTGL.

This sequence belongs to the universal ribosomal protein uL23 family. As to quaternary structure, part of the 50S ribosomal subunit. Contacts protein L29, and trigger factor when it is bound to the ribosome.

Functionally, one of the early assembly proteins it binds 23S rRNA. One of the proteins that surrounds the polypeptide exit tunnel on the outside of the ribosome. Forms the main docking site for trigger factor binding to the ribosome. The protein is Large ribosomal subunit protein uL23 of Caulobacter sp. (strain K31).